Reading from the N-terminus, the 135-residue chain is Transcriptional activator protein (135 aa).

Positions lysine 17–arginine 32 match the Nuclear localization signal motif. The segment at cysteine 37 to histidine 54 is a zinc-finger region. Residues histidine 120 to leucine 135 are transactivation.

Belongs to the geminiviridae transcriptional activator protein family. Monomer. Homodimer. Homooligomer. Self-interaction correlates with nuclear localization and efficient activation of transcription. Monomers suppress local silencing by interacting with and inactivating host adenosine kinase 2 (ADK2) in the cytoplasm. Interacts with and inhibits host SNF1 kinase. Binds to ssDNA. May interact with host RPS27A. Post-translationally, phosphorylated.

It is found in the host nucleus. The protein resides in the host cytoplasm. Multifunctional protein that modulates host antiviral defenses and promotes host attractiveness to insect vectors. Acts as a suppressor of RNA-mediated gene silencing, also known as post-transcriptional gene silencing (PTGS), a mechanism of plant viral defense that limits the accumulation of viral RNAs. TrAP suppresses the host RNA silencing by inhibiting adenosine kinase 2 (ADK2), a kinase involved in a general methylation pathway. Also suppresses the host basal defense by interacting with and inhibiting SNF1 kinase, a key regulator of cell metabolism implicated in innate antiviral defense. Its function is as follows. Inhibits signal transduction by the phytohormone jasmonate, making the infected plant more attractive to aphids, which are the second host to play a role as a dissemination vector. Acts by binding to ubiquitin precursor RPS27A, thereby preventing ubiquitin degradation of JAZ. The sequence is that of Transcriptional activator protein from Capsicum annuum (Capsicum pepper).